We begin with the raw amino-acid sequence, 201 residues long: MDKFTTLTGIAAPMPLINVDTDMIIPKQFLKTIKRSGLGANLFDEMRFDDDGNEIPDFVLNKPAYRDAQILVAGDNFGCGSSREHAPWALLDFGIRCVIATSFADIFYNNCFKNGILPIVLLQEQVDMLMDDAERGANAVVSVDLESQTITGPDGGTISFEVDAFRKHCLLNGLDDIGLTLEKAPSIKAFEAEAAQARPWV.

Belongs to the LeuD family. LeuD type 1 subfamily. As to quaternary structure, heterodimer of LeuC and LeuD.

The catalysed reaction is (2R,3S)-3-isopropylmalate = (2S)-2-isopropylmalate. It functions in the pathway amino-acid biosynthesis; L-leucine biosynthesis; L-leucine from 3-methyl-2-oxobutanoate: step 2/4. Its function is as follows. Catalyzes the isomerization between 2-isopropylmalate and 3-isopropylmalate, via the formation of 2-isopropylmaleate. In Jannaschia sp. (strain CCS1), this protein is 3-isopropylmalate dehydratase small subunit.